Reading from the N-terminus, the 372-residue chain is Phenylalanine--tRNA ligase alpha subunit (372 aa).

Residue glutamate 276 coordinates Mg(2+).

It belongs to the class-II aminoacyl-tRNA synthetase family. Phe-tRNA synthetase alpha subunit type 1 subfamily. Tetramer of two alpha and two beta subunits. Requires Mg(2+) as cofactor.

It localises to the cytoplasm. The enzyme catalyses tRNA(Phe) + L-phenylalanine + ATP = L-phenylalanyl-tRNA(Phe) + AMP + diphosphate + H(+). This is Phenylalanine--tRNA ligase alpha subunit from Thermobifida fusca (strain YX).